A 101-amino-acid chain; its full sequence is Integration host factor subunit beta (101 aa).

A disordered region spans residues 57 to 77; the sequence is PARAGRNPRTGAHVPVDQKSV.

The protein belongs to the bacterial histone-like protein family. In terms of assembly, heterodimer of an alpha and a beta chain.

In terms of biological role, this protein is one of the two subunits of integration host factor, a specific DNA-binding protein that functions in genetic recombination as well as in transcriptional and translational control. The protein is Integration host factor subunit beta of Rhodopseudomonas palustris (strain HaA2).